The following is a 529-amino-acid chain: Peptide chain release factor 3 (529 aa).

The 269-residue stretch at 10–278 folds into the tr-type G domain; that stretch reads ARRRTFAIIS…NFVDLAPAPR (269 aa). GTP contacts are provided by residues 19-26, 87-91, and 141-144; these read SHPDAGKT, DTPGH, and NKLD.

This sequence belongs to the TRAFAC class translation factor GTPase superfamily. Classic translation factor GTPase family. PrfC subfamily.

The protein localises to the cytoplasm. Increases the formation of ribosomal termination complexes and stimulates activities of RF-1 and RF-2. It binds guanine nucleotides and has strong preference for UGA stop codons. It may interact directly with the ribosome. The stimulation of RF-1 and RF-2 is significantly reduced by GTP and GDP, but not by GMP. The chain is Peptide chain release factor 3 from Nitratidesulfovibrio vulgaris (strain ATCC 29579 / DSM 644 / CCUG 34227 / NCIMB 8303 / VKM B-1760 / Hildenborough) (Desulfovibrio vulgaris).